A 513-amino-acid chain; its full sequence is Maturase K (513 aa).

The protein belongs to the intron maturase 2 family. MatK subfamily.

Its subcellular location is the plastid. The protein resides in the chloroplast. Its function is as follows. Usually encoded in the trnK tRNA gene intron. Probably assists in splicing its own and other chloroplast group II introns. In Typha latifolia (Bulrush), this protein is Maturase K.